Consider the following 69-residue polypeptide: Metallothionein-like protein CRS5 (69 aa).

The protein belongs to the metallothionein superfamily. Type 13 family.

In terms of biological role, critical role in copper (specific) homeostasis and detoxification. May protect by directly chelating and sequestering copper ions. This Saccharomyces cerevisiae (strain RM11-1a) (Baker's yeast) protein is Metallothionein-like protein CRS5 (CRS5).